Reading from the N-terminus, the 224-residue chain is UPF0111 protein CT_691 (224 aa).

This sequence belongs to the UPF0111 family.

This chain is UPF0111 protein CT_691, found in Chlamydia trachomatis serovar D (strain ATCC VR-885 / DSM 19411 / UW-3/Cx).